A 609-amino-acid chain; its full sequence is Actin-interacting protein 1-2 (609 aa).

WD repeat units follow at residues 2 to 42 (ELSE…VTLD), 54 to 93 (EHAYPATVARYSPNGEWIASGDVSGTVRIWGAYNDHVLKN), 97 to 141 (VLAG…GEFD), 142 to 182 (GHSR…FKLS), 185 to 224 (EHSNFVNCVRFAPDGSKFITVSSDKKGIIYDGKTCEILGE), 230 to 269 (GHKGSIYAVSWSPDGKQVLTVSADKSAKIWDISDNGSGSL), 277 to 318 (GSSG…KSPF), 322 to 362 (GHMK…CGKL), 445 to 484 (NLGFIVTALAVTPDGTEAVIGGQDGKLHLYSINGDSLTEE), 489 to 528 (RHRGAISVIRYSPDLSMFASADLNREAVVWDRVSREMKLK), 532 to 571 (YHSARINCLAWSPNSTMVATGSLDTCVIVYEVDKPASSRM), and 576 to 609 (AHLGGVYGLGFADDSHVVSSGEDACIRVWSFTPQ).

As to expression, expressed in leaves, stems, flower buds and flowers.

Functionally, binds actin. Enhances the F-actin depolymerization activity of actin-depolymerizing factor (ADF) proteins. This Arabidopsis thaliana (Mouse-ear cress) protein is Actin-interacting protein 1-2.